Here is a 358-residue protein sequence, read N- to C-terminus: Neutral protease 2 homolog PADG_00776 (358 aa).

An N-terminal signal peptide occupies residues 1–19 (MRRVSGILAVAAFTISAFA). Residues 20 to 185 (GVIQPVAKDA…MNQFVKIAKL (166 aa)) constitute a propeptide that is removed on maturation. 2 cysteine pairs are disulfide-bonded: Cys188–Cys259 and Cys266–Cys284. An N-linked (GlcNAc...) asparagine glycan is attached at Asn249. His309 lines the Zn(2+) pocket. Glu310 is an active-site residue. Positions 313 and 324 each coordinate Zn(2+).

It belongs to the peptidase M35 family. It depends on Zn(2+) as a cofactor.

It localises to the secreted. The catalysed reaction is Preferential cleavage of bonds with hydrophobic residues in P1'. Also 3-Asn-|-Gln-4 and 8-Gly-|-Ser-9 bonds in insulin B chain.. In terms of biological role, secreted metalloproteinase that allows assimilation of proteinaceous substrates. Shows high activities on basic nuclear substrates such as histone and protamine. This Paracoccidioides brasiliensis (strain Pb18) protein is Neutral protease 2 homolog PADG_00776.